Here is a 319-residue protein sequence, read N- to C-terminus: 4-diphosphocytidyl-2-C-methyl-D-erythritol kinase (319 aa).

Lys-21 is a catalytic residue. 106 to 116 serves as a coordination point for ATP; the sequence is PIGAGLAGGSS. Asp-148 is an active-site residue.

Belongs to the GHMP kinase family. IspE subfamily.

The catalysed reaction is 4-CDP-2-C-methyl-D-erythritol + ATP = 4-CDP-2-C-methyl-D-erythritol 2-phosphate + ADP + H(+). It participates in isoprenoid biosynthesis; isopentenyl diphosphate biosynthesis via DXP pathway; isopentenyl diphosphate from 1-deoxy-D-xylulose 5-phosphate: step 3/6. Functionally, catalyzes the phosphorylation of the position 2 hydroxy group of 4-diphosphocytidyl-2C-methyl-D-erythritol. This Prochlorococcus marinus (strain MIT 9303) protein is 4-diphosphocytidyl-2-C-methyl-D-erythritol kinase.